Consider the following 538-residue polypeptide: CTP synthase (538 aa).

An amidoligase domain region spans residues methionine 1 to leucine 267. Serine 15 serves as a coordination point for CTP. UTP is bound at residue serine 15. ATP-binding positions include serine 16–isoleucine 21 and aspartate 73. 2 residues coordinate Mg(2+): aspartate 73 and glutamate 141. Residues aspartate 148–glutamate 150, lysine 188–glutamine 193, and lysine 224 each bind CTP. Residues lysine 188–glutamine 193 and lysine 224 contribute to the UTP site. In terms of domain architecture, Glutamine amidotransferase type-1 spans lysine 292–serine 538. Glycine 351 lines the L-glutamine pocket. Cysteine 378 serves as the catalytic Nucleophile; for glutamine hydrolysis. Residues leucine 379–glutamine 382, glutamate 402, and arginine 469 contribute to the L-glutamine site. Catalysis depends on residues histidine 513 and glutamate 515.

Belongs to the CTP synthase family. In terms of assembly, homotetramer.

It carries out the reaction UTP + L-glutamine + ATP + H2O = CTP + L-glutamate + ADP + phosphate + 2 H(+). It catalyses the reaction L-glutamine + H2O = L-glutamate + NH4(+). The catalysed reaction is UTP + NH4(+) + ATP = CTP + ADP + phosphate + 2 H(+). It participates in pyrimidine metabolism; CTP biosynthesis via de novo pathway; CTP from UDP: step 2/2. Its activity is regulated as follows. Allosterically activated by GTP, when glutamine is the substrate; GTP has no effect on the reaction when ammonia is the substrate. The allosteric effector GTP functions by stabilizing the protein conformation that binds the tetrahedral intermediate(s) formed during glutamine hydrolysis. Inhibited by the product CTP, via allosteric rather than competitive inhibition. In terms of biological role, catalyzes the ATP-dependent amination of UTP to CTP with either L-glutamine or ammonia as the source of nitrogen. Regulates intracellular CTP levels through interactions with the four ribonucleotide triphosphates. This chain is CTP synthase, found in Helicobacter pylori (strain ATCC 700392 / 26695) (Campylobacter pylori).